Here is an 806-residue protein sequence, read N- to C-terminus: Ankyrin repeat, bromo and BTB domain-containing protein DDB_G0293800 (806 aa).

ANK repeat units lie at residues 1 to 30 (MSNK…DVNQ), 34 to 63 (SNRY…LVNC), 67 to 96 (RGAT…DVNC), 100 to 130 (AGST…DVNL), and 134 to 163 (EGST…RADV). The segment covering 210-228 (GVGKKEDDDNNMKIDKQES) has biased composition (basic and acidic residues). The interval 210–231 (GVGKKEDDDNNMKIDKQESEQQ) is disordered. One can recognise a BTB domain in the interval 239-307 (SDITFLIENQ…IYTGSIEKFE (69 aa)). Disordered regions lie at residues 423–517 (TRTA…SDSM) and 621–743 (QNFP…EERR). Composition is skewed to low complexity over residues 426 to 436 (ANANASNSNQS) and 443 to 511 (TSTT…SSSS). The 107-residue stretch at 516-622 (SMNEKNLTFC…NAFDQKFLQN (107 aa)) folds into the Bromo domain. Residues 626 to 641 (EKPPTYKPPPPTPTPI) are compositionally biased toward pro residues. Positions 642-658 (PTQQQQQQSTSSTSTPT) are enriched in low complexity. Residues 666 to 675 (DEHVKVKEDT) show a composition bias toward basic and acidic residues. Residues 676–693 (NSAQPTSSSSNHTNGENA) show a composition bias toward polar residues. Residues 694-733 (SSSSSSSSSKQSNNNNNNNNNNNSNSTTNSSSSSSSTTTT) are compositionally biased toward low complexity. Residues 727 to 806 (SSSTTTTQKK…ECFKKQKQDE (80 aa)) enclose the NET domain.

The chain is Ankyrin repeat, bromo and BTB domain-containing protein DDB_G0293800 from Dictyostelium discoideum (Social amoeba).